We begin with the raw amino-acid sequence, 312 residues long: Glyoxylate/hydroxypyruvate reductase A (312 aa).

Residue Arg227 is part of the active site. His275 functions as the Proton donor in the catalytic mechanism.

Belongs to the D-isomer specific 2-hydroxyacid dehydrogenase family. GhrA subfamily.

It is found in the cytoplasm. It catalyses the reaction glycolate + NADP(+) = glyoxylate + NADPH + H(+). The enzyme catalyses (R)-glycerate + NAD(+) = 3-hydroxypyruvate + NADH + H(+). It carries out the reaction (R)-glycerate + NADP(+) = 3-hydroxypyruvate + NADPH + H(+). Catalyzes the NADPH-dependent reduction of glyoxylate and hydroxypyruvate into glycolate and glycerate, respectively. This is Glyoxylate/hydroxypyruvate reductase A from Salmonella paratyphi B (strain ATCC BAA-1250 / SPB7).